The primary structure comprises 532 residues: MAGIFIYGLSPSFCPDVVAVNVSHIFLQMALWRSSDNLVYLPPTPVSKVLSTDDYVTRTNIYYYAGSSRLLTVGHPYFAIPKSSNSKMDIPKVSAFQYRVFRVRLPDPNKFGLPDARIYNPDAERLVWACTGVEVGRGLPLGVGLSGHPLYNKLDDTENSNIAHGDIGKDSRDNISVDNKQTQLCIVGCTPPMGEHWGKGTPCKQNASPGDCPPLELITAPIQDGDMVDTGYGAMDFGNLQSNKSDVPLDICQTTCKYPDYLGMAAEPYGDSMFFYLRKEQLFARHFLNRAGMAGDTVPDALYIKGDSQSGGRDKIGSAVYCPTPSGSMVTSETQLFNKPYWLRRAQGHNNGICWANQLFVTVVDTTRSTNMTLCVSTETSATYDATKFKEYLRHGEEYDLQFIFQLCKVTLTPEIMAYLHTMNSTLLEDWNFGLTLPPSTSLEDTYRFLTSSAITCQKDAPPTEKQDPYAKLNFWDVDLKDRFSLDLSQFPLGRKFLMQLGVGTRSSISVRKRSATTTSRTAAAKRKRTKK.

Positions 512–532 (RKRSATTTSRTAAAKRKRTKK) are disordered.

The protein belongs to the papillomaviridae L1 protein family. As to quaternary structure, self-assembles into homopentamers. The capsid has an icosahedral symmetry and consists of 72 capsomers, with each capsomer being a pentamer of L1. Interacts with the minor capsid protein L2; this interaction is necessary for viral genome encapsidation. Interacts with protein E2; this interaction enhances E2-dependent replication and transcription activation.

The protein localises to the virion. Its subcellular location is the host nucleus. Its function is as follows. Forms an icosahedral capsid with a T=7 symmetry and a 50 nm diameter. The capsid is composed of 72 pentamers linked to each other by disulfide bonds and associated with L2 proteins. Binds to heparan sulfate proteoglycans on cell surface of basal layer keratinocytes to provide initial virion attachment. This binding mediates a conformational change in the virus capsid that facilitates efficient infection. The virion enters the host cell via endocytosis. During virus trafficking, L1 protein dissociates from the viral DNA and the genomic DNA is released to the host nucleus. The virion assembly takes place within the cell nucleus. Encapsulates the genomic DNA together with protein L2. The chain is Major capsid protein L1 from Human papillomavirus 3.